An 805-amino-acid polypeptide reads, in one-letter code: Sucrose synthase (805 aa).

The interval 275-752 (MVFNVVILSP…GLKRIEEKYT (478 aa)) is GT-B glycosyltransferase.

This sequence belongs to the glycosyltransferase 1 family. Plant sucrose synthase subfamily. In terms of tissue distribution, expression is at least 10-fold higher in tubers compared to photosynthetically active tissues.

It carries out the reaction an NDP-alpha-D-glucose + D-fructose = a ribonucleoside 5'-diphosphate + sucrose + H(+). Functionally, sucrose-cleaving enzyme that provides UDP-glucose and fructose for various metabolic pathways. This Solanum tuberosum (Potato) protein is Sucrose synthase.